The primary structure comprises 299 residues: 4-hydroxy-tetrahydrodipicolinate synthase (299 aa).

Thr-45 provides a ligand contact to pyruvate. Tyr-133 serves as the catalytic Proton donor/acceptor. Residue Lys-161 is the Schiff-base intermediate with substrate of the active site. Ile-203 lines the pyruvate pocket.

The protein belongs to the DapA family. As to quaternary structure, homotetramer; dimer of dimers.

It is found in the cytoplasm. The enzyme catalyses L-aspartate 4-semialdehyde + pyruvate = (2S,4S)-4-hydroxy-2,3,4,5-tetrahydrodipicolinate + H2O + H(+). The protein operates within amino-acid biosynthesis; L-lysine biosynthesis via DAP pathway; (S)-tetrahydrodipicolinate from L-aspartate: step 3/4. Its function is as follows. Catalyzes the condensation of (S)-aspartate-beta-semialdehyde [(S)-ASA] and pyruvate to 4-hydroxy-tetrahydrodipicolinate (HTPA). The sequence is that of 4-hydroxy-tetrahydrodipicolinate synthase from Blochmanniella pennsylvanica (strain BPEN).